Reading from the N-terminus, the 295-residue chain is MSSSRPVFRSRWLPYLLVAPQLIITVIFFIWPAGEALWYSLQSVDPFGFSSQFVGLDNFVTLFHDSYYLDSFWTTIKFSTFVTVSGLLVSLFFAALVEYIVRGSRFYQTLMLLPYAVAPAVAAVLWIFLFNPGRGLITHFLAEFGYDWNHAQNSGQAMFLVVFASVWKQISYNFLFFYAALQSIPRSLIEAAAIDGAGPIRRFFKIALPLIAPVSFFLLVVNLVYAFFDTFPVIDAATSGGPVQATTTLIYKIYREGFTGLDLASSAAQSMVLMFLVIVLTVVQFRYVESKVRYQ.

The Cytoplasmic portion of the chain corresponds to 1–11 (MSSSRPVFRSR). Residues 12 to 32 (WLPYLLVAPQLIITVIFFIWP) form a helical membrane-spanning segment. Topologically, residues 33–80 (AGEALWYSLQSVDPFGFSSQFVGLDNFVTLFHDSYYLDSFWTTIKFST) are periplasmic. The 209-residue stretch at 76–284 (IKFSTFVTVS…FLVIVLTVVQ (209 aa)) folds into the ABC transmembrane type-1 domain. Residues 81–101 (FVTVSGLLVSLFFAALVEYIV) traverse the membrane as a helical segment. Over 102 to 109 (RGSRFYQT) the chain is Cytoplasmic. Residues 110–130 (LMLLPYAVAPAVAAVLWIFLF) form a helical membrane-spanning segment. Topologically, residues 131–156 (NPGRGLITHFLAEFGYDWNHAQNSGQ) are periplasmic. A helical transmembrane segment spans residues 157-177 (AMFLVVFASVWKQISYNFLFF). Over 178-207 (YAALQSIPRSLIEAAAIDGAGPIRRFFKIA) the chain is Cytoplasmic. A helical transmembrane segment spans residues 208 to 228 (LPLIAPVSFFLLVVNLVYAFF). Residues 229-262 (DTFPVIDAATSGGPVQATTTLIYKIYREGFTGLD) lie on the Periplasmic side of the membrane. The chain crosses the membrane as a helical span at residues 263 to 283 (LASSAAQSMVLMFLVIVLTVV). At 284–295 (QFRYVESKVRYQ) the chain is on the cytoplasmic side.

The protein belongs to the binding-protein-dependent transport system permease family. UgpAE subfamily. As to quaternary structure, the complex is composed of two ATP-binding proteins (UgpC), two transmembrane proteins (UgpA and UgpE) and a solute-binding protein (UgpB).

Its subcellular location is the cell inner membrane. In terms of biological role, part of the ABC transporter complex UgpBAEC involved in sn-glycerol-3-phosphate (G3P) import. Probably responsible for the translocation of the substrate across the membrane. The chain is sn-glycerol-3-phosphate transport system permease protein UgpA (ugpA) from Shigella flexneri.